The chain runs to 348 residues: Erlin-1 (348 aa).

Over 1-7 the chain is Cytoplasmic; sequence MNMTQAR. A helical membrane pass occupies residues 8 to 28; it reads VLVAAVVGLVAVLLYASIHKI. At 29 to 348 the chain is on the lumenal side; that stretch reads EEGHLAVYYR…NVIQNKESTG (320 aa). An N-linked (GlcNAc...) asparagine glycan is attached at asparagine 108. Position 269 is an N6-acetyllysine (lysine 269). Positions 325-348 are disordered; that stretch reads SSLPSKEALEPSGENVIQNKESTG. The span at 339–348 shows a compositional bias: polar residues; that stretch reads NVIQNKESTG.

This sequence belongs to the band 7/mec-2 family. As to quaternary structure, forms a heteromeric complex with ERLIN2. In complex with ERLIN2, interacts with RNF170. Interacts with AMFR and SYVN1. Deubiquitinated by USP25; leading to stabilization. In terms of tissue distribution, expressed in heart, placenta, liver, kidney, pancreas, prostate, testis, ovary and small intestine.

The protein localises to the endoplasmic reticulum membrane. Its function is as follows. Component of the ERLIN1/ERLIN2 complex which mediates the endoplasmic reticulum-associated degradation (ERAD) of inositol 1,4,5-trisphosphate receptors (IP3Rs). Involved in regulation of cellular cholesterol homeostasis by regulation the SREBP signaling pathway. Binds cholesterol and may promote ER retention of the SCAP-SREBF complex. In terms of biological role, (Microbial infection) Required early in hepatitis C virus (HCV) infection to initiate RNA replication, and later in the infection to support infectious virus production. The chain is Erlin-1 from Homo sapiens (Human).